Consider the following 400-residue polypeptide: Endophilin-B2 (400 aa).

At Met1 the chain carries N-acetylmethionine. The tract at residues 1–27 (MDFNMKKLASDAGIFFTRAVQFTEEKF) is membrane-binding amphipathic helix. Position 10 is a phosphoserine (Ser10). The BAR domain occupies 24-287 (EEKFGQAEKT…LGSSQGAIFP (264 aa)). Residues 205 to 234 (SASALWNDEVDKAEQELRVAQTEFDRQAEV) adopt a coiled-coil conformation. Residues 340–400 (SGTRKARVLY…VPVTYLELLS (61 aa)) enclose the SH3 domain. Ser400 carries the post-translational modification Phosphoserine.

Belongs to the endophilin family. As to quaternary structure, homodimer, and heterodimer with SH3GLB1.

It is found in the cytoplasm. The polypeptide is Endophilin-B2 (Sh3glb2) (Mus musculus (Mouse)).